The following is a 420-amino-acid chain: Argininosuccinate synthase (420 aa).

Position 11 to 19 (11 to 19 (AFSGGLDTT)) interacts with ATP. An L-citrulline-binding site is contributed by tyrosine 88. Glycine 118 serves as a coordination point for ATP. L-aspartate-binding residues include threonine 120, asparagine 124, and aspartate 125. Asparagine 124 contacts L-citrulline. Arginine 128, serine 174, serine 183, glutamate 257, and tyrosine 269 together coordinate L-citrulline. The segment at 401-420 (KGAAVTDGSGDHAASEDTEE) is disordered. Residues 409-420 (SGDHAASEDTEE) show a composition bias toward basic and acidic residues.

It belongs to the argininosuccinate synthase family. Type 1 subfamily. In terms of assembly, homotetramer.

The protein resides in the cytoplasm. It carries out the reaction L-citrulline + L-aspartate + ATP = 2-(N(omega)-L-arginino)succinate + AMP + diphosphate + H(+). The protein operates within amino-acid biosynthesis; L-arginine biosynthesis; L-arginine from L-ornithine and carbamoyl phosphate: step 2/3. The polypeptide is Argininosuccinate synthase (Haloarcula marismortui (strain ATCC 43049 / DSM 3752 / JCM 8966 / VKM B-1809) (Halobacterium marismortui)).